Reading from the N-terminus, the 559-residue chain is Asparagine--tRNA ligase, cytoplasmic (559 aa).

Ser-72 bears the Phosphoserine mark. N6-acetyllysine occurs at positions 255 and 501.

The protein belongs to the class-II aminoacyl-tRNA synthetase family.

Its subcellular location is the cytoplasm. The catalysed reaction is tRNA(Asn) + L-asparagine + ATP = L-asparaginyl-tRNA(Asn) + AMP + diphosphate + H(+). This is Asparagine--tRNA ligase, cytoplasmic (NARS) from Bos taurus (Bovine).